We begin with the raw amino-acid sequence, 407 residues long: DNA primase DnaG (407 aa).

A Toprim domain is found at 172–248; that stretch reads DWIIVVEGRA…HIDYVARAPP (77 aa). The Mg(2+) site is built by glutamate 178, aspartate 222, and aspartate 224. A disordered region spans residues 279-304; it reads AGAEKTEAAAPPPQQPTAPPAAPSQQ. A compositionally biased stretch (pro residues) spans 288–300; that stretch reads APPPQQPTAPPAA.

This sequence belongs to the archaeal DnaG primase family. Forms a ternary complex with MCM helicase and DNA. Component of the archaeal exosome complex. The cofactor is Mg(2+).

It carries out the reaction ssDNA + n NTP = ssDNA/pppN(pN)n-1 hybrid + (n-1) diphosphate.. Its function is as follows. RNA polymerase that catalyzes the synthesis of short RNA molecules used as primers for DNA polymerase during DNA replication. Also part of the exosome, which is a complex involved in RNA degradation. Acts as a poly(A)-binding protein that enhances the interaction between heteromeric, adenine-rich transcripts and the exosome. The protein is DNA primase DnaG of Pyrobaculum calidifontis (strain DSM 21063 / JCM 11548 / VA1).